The primary structure comprises 420 residues: MVSKGLLRLVSSVNRRRMKLLLGIALFAYAASVWGNFVNMRSIQENGELKIESKIEEIVEPLREKIRDLEKSFTQKYPPVKFLSEKDRKRILITGGAGFVGSHLTDKLMMDGHEVTVVDNFFTGRKRNVEHWIGHENFELINHDVVEPLYIEVDQIYHLASPASPPNYMYNPIKTLKTNTIGTLNMLGLAKRVGARLLLASTSEVYGDPEVHPQSEDYWGHVNPIGPRACYDEGKRVAETMCYAYMKQEGVEVRVARIFNTFGPRMHMNDGRVVSNFILQALQGEPLTVYGSGSQTRAFQYVSDLVNGLVALMNSNVSSPVNLGNPEEHTILEFAQLIKNLVGSGSEIQFLSEAQDDPQKRKPDIKKAKLMLGWEPVVPLEEGLNKAIHYFRKELEYQANNQYIPKPKPARVKKGRTRHS.

Met1 bears the N-acetylmethionine mark. Over 1-19 the chain is Cytoplasmic; it reads MVSKGLLRLVSSVNRRRMK. A helical; Signal-anchor for type II membrane protein transmembrane segment spans residues 20 to 40; sequence LLLGIALFAYAASVWGNFVNM. At 41–420 the chain is on the lumenal side; sequence RSIQENGELK…RVKKGRTRHS (380 aa). Thr94 is subject to Phosphothreonine. Residues Gly98, Phe99, Val100, Asp119, Asn120, Phe122, Thr123, Gly124, Asp144, and Val145 each contribute to the NAD(+) site. UDP-alpha-D-glucuronate-binding residues include Leu149 and Tyr150. Residues Leu159 and Ser161 each contribute to the NAD(+) site. Residue Lys177 participates in UDP-alpha-D-glucuronate binding. Thr178 contributes to the NAD(+) binding site. The UDP-alpha-D-glucuronate site is built by Asn185, Gly188, Lys191, and Arg192. 3 residues coordinate NAD(+): Ala200, Tyr231, and Lys235. Catalysis depends on Tyr231, which acts as the Proton acceptor. UDP-alpha-D-glucuronate-binding residues include Tyr245, Gln248, and Glu249. Residues Thr261, His267, and Arg272 each coordinate NAD(+). Residue Asn316 is glycosylated (N-linked (GlcNAc...) asparagine).

The protein belongs to the NAD(P)-dependent epimerase/dehydratase family. UDP-glucuronic acid decarboxylase subfamily. Homodimer and homotetramer. Interacts with AKT1. Requires NAD(+) as cofactor.

Its subcellular location is the golgi apparatus. The protein resides in the golgi stack membrane. It carries out the reaction UDP-alpha-D-glucuronate + H(+) = UDP-alpha-D-xylose + CO2. Its pathway is nucleotide-sugar biosynthesis; UDP-alpha-D-xylose biosynthesis; UDP-alpha-D-xylose from UDP-alpha-D-glucuronate: step 1/1. Its function is as follows. Catalyzes the NAD-dependent decarboxylation of UDP-glucuronic acid to UDP-xylose. Necessary for the biosynthesis of the core tetrasaccharide in glycosaminoglycan biosynthesis. This Mus musculus (Mouse) protein is UDP-glucuronic acid decarboxylase 1 (Uxs1).